A 49-amino-acid polypeptide reads, in one-letter code: Small, acid-soluble spore protein K (49 aa).

A disordered region spans residues 1–49 (MRNKSRGFPNMNNNKFEGEPRAKDDFASKRPDGSTNTHPQERMRASGKR). Composition is skewed to basic and acidic residues over residues 16–32 (FEGEPRAKDDFASKRPD) and 39–49 (PQERMRASGKR).

It belongs to the SspK family.

Its subcellular location is the spore core. This is Small, acid-soluble spore protein K from Bacillus licheniformis (strain ATCC 14580 / DSM 13 / JCM 2505 / CCUG 7422 / NBRC 12200 / NCIMB 9375 / NCTC 10341 / NRRL NRS-1264 / Gibson 46).